Consider the following 512-residue polypeptide: Cytochrome P450 98A1 (512 aa).

A helical transmembrane segment spans residues 3 to 23 (ASLLLSVALAVVLIPLSLALL). Residue Cys441 coordinates heme.

This sequence belongs to the cytochrome P450 family. It depends on heme as a cofactor.

It localises to the membrane. This chain is Cytochrome P450 98A1 (CYP98A1), found in Sorghum bicolor (Sorghum).